We begin with the raw amino-acid sequence, 225 residues long: Small ribosomal subunit protein eS1 (225 aa).

It belongs to the eukaryotic ribosomal protein eS1 family.

The sequence is that of Small ribosomal subunit protein eS1 from Methanococcus maripaludis (strain C6 / ATCC BAA-1332).